A 226-amino-acid chain; its full sequence is Cytidylate kinase (226 aa).

Position 10–18 (10–18 (GPAGAGKST)) interacts with ATP.

Belongs to the cytidylate kinase family. Type 1 subfamily.

It is found in the cytoplasm. The catalysed reaction is CMP + ATP = CDP + ADP. The enzyme catalyses dCMP + ATP = dCDP + ADP. The sequence is that of Cytidylate kinase from Caldicellulosiruptor bescii (strain ATCC BAA-1888 / DSM 6725 / KCTC 15123 / Z-1320) (Anaerocellum thermophilum).